Here is a 55-residue protein sequence, read N- to C-terminus: Large ribosomal subunit protein bL33 (55 aa).

In terms of processing, the protein is methylated on either Ala-2 or Lys-3.

This is Large ribosomal subunit protein bL33 from Rhodopseudomonas palustris (strain ATCC BAA-98 / CGA009).